The sequence spans 601 residues: Dual specificity tyrosine-phosphorylation-regulated kinase 2 (601 aa).

The disordered stretch occupies residues 1 to 24 (MLTRKPSAAAPAAYPTGRGGDSAV). Phosphoserine is present on S30. At T106 the chain carries Phosphothreonine; by ATM. The short motif at 189–191 (KKR) is the Nuclear localization signal element. One can recognise a Protein kinase domain in the interval 222 to 535 (YEVLKVIGKG…PGQALRHPWL (314 aa)). Residues 228-236 (IGKGSFGQV), K251, and 301-304 (FELL) contribute to the ATP site. Residue D348 is the Proton acceptor of the active site. Phosphothreonine; by MAP3K10 is present on T381. Position 382 is a phosphotyrosine; by autocatalysis (Y382). S442 is subject to Phosphoserine; by ATM. S449 bears the Phosphoserine; by MAP3K10 mark.

The protein belongs to the protein kinase superfamily. CMGC Ser/Thr protein kinase family. MNB/DYRK subfamily. As to quaternary structure, component of an E3 ligase complex containing DYRK2, EDD/UBR5, DDB1 and DCAF1 (EDVP complex). Interacts directly with EDD/UBR5, DDB1 and DCAF1. Interacts with SIAH2 and MDM2. Interacts with MAP3K10 and NFATC1. May also interact with CCNL2. Mg(2+) serves as cofactor. The cofactor is Mn(2+). In terms of processing, autophosphorylates cotranslationally on the second tyrosine residue in the Tyr-X-Tyr motif in the activation loop, but once mature, does not have any protein tyrosine kinase activity. Phosphorylated at Thr-106 and Ser-442 by ATM in response to genotoxic stress. Under normal conditions, polyubiquitinated in the nucleus by MDM2, leading to its proteasomal degradation. Phosphorylation on Thr-106 and Ser-442 by ATM in response to genotoxic stress disrupts MDM2 binding and prevents MDM2-mediated ubiquitination and subsequent proteasomal degradation. Polyubiquitinated by SIAH2, leading to its proteasomal degradation. Polyubiquitinated by SIAH2 occurs under normal conditions, and is enhanced in response to hypoxia. In terms of tissue distribution, testis, after the onset of spermatogenesis.

The protein resides in the cytoplasm. The protein localises to the nucleus. It catalyses the reaction L-seryl-[protein] + ATP = O-phospho-L-seryl-[protein] + ADP + H(+). It carries out the reaction L-threonyl-[protein] + ATP = O-phospho-L-threonyl-[protein] + ADP + H(+). The enzyme catalyses L-tyrosyl-[protein] + ATP = O-phospho-L-tyrosyl-[protein] + ADP + H(+). Activated by autophosphorylation on the second tyrosine residue in the Tyr-X-Tyr motif in the activation loop. Inhibited by acridine analogs, purvalanol, and barely by harmine. Inhibited by leucettine and leucettine derivatives. Functionally, serine/threonine-protein kinase involved in the regulation of the mitotic cell cycle, cell proliferation, apoptosis, organization of the cytoskeleton and neurite outgrowth. Functions in part via its role in ubiquitin-dependent proteasomal protein degradation. Functions downstream of ATM and phosphorylates p53/TP53 at 'Ser-46', and thereby contributes to the induction of apoptosis in response to DNA damage. Phosphorylates NFATC1, and thereby inhibits its accumulation in the nucleus and its transcription factor activity. Phosphorylates EIF2B5 at 'Ser-544', enabling its subsequent phosphorylation and inhibition by GSK3B. Likewise, phosphorylation of NFATC1, CRMP2/DPYSL2 and CRMP4/DPYSL3 promotes their subsequent phosphorylation by GSK3B. May play a general role in the priming of GSK3 substrates. Inactivates GYS1 by phosphorylation at 'Ser-641', and potentially also a second phosphorylation site, thus regulating glycogen synthesis. Mediates EDVP E3 ligase complex formation and is required for the phosphorylation and subsequent degradation of KATNA1. Phosphorylates TERT at 'Ser-457', promoting TERT ubiquitination by the EDVP complex. Phosphorylates SIAH2, and thereby increases its ubiquitin ligase activity. Promotes the proteasomal degradation of MYC and JUN, and thereby regulates progress through the mitotic cell cycle and cell proliferation. Promotes proteasomal degradation of GLI2 and GLI3, and thereby plays a role in smoothened and sonic hedgehog signaling. Plays a role in cytoskeleton organization and neurite outgrowth via its phosphorylation of DCX and DPYSL2. Phosphorylates CRMP2/DPYSL2, CRMP4/DPYSL3, DCX, EIF2B5, EIF4EBP1, GLI2, GLI3, GYS1, JUN, MDM2, MYC, NFATC1, p53/TP53, TAU/MAPT and KATNA1. Can phosphorylate histone H1, histone H3 and histone H2B (in vitro). Can phosphorylate CARHSP1 (in vitro). The polypeptide is Dual specificity tyrosine-phosphorylation-regulated kinase 2 (DYRK2) (Homo sapiens (Human)).